Consider the following 116-residue polypeptide: Large ribosomal subunit protein bL19 (116 aa).

It belongs to the bacterial ribosomal protein bL19 family.

Its function is as follows. This protein is located at the 30S-50S ribosomal subunit interface and may play a role in the structure and function of the aminoacyl-tRNA binding site. This chain is Large ribosomal subunit protein bL19, found in Clostridium beijerinckii (strain ATCC 51743 / NCIMB 8052) (Clostridium acetobutylicum).